A 1375-amino-acid chain; its full sequence is Mediator of RNA polymerase II transcription subunit 13 (1375 aa).

The segment at 1–51 (MKASEMARPPMRPGNPHAFASPATTPSRTASPNNAQGANVRTTQGGNQAGA) is disordered. The span at 22–51 (PATTPSRTASPNNAQGANVRTTQGGNQAGA) shows a compositional bias: polar residues. Coiled coils occupy residues 182-216 (ADDS…WLSR) and 297-324 (QLER…KDEA). A compositionally biased stretch (basic and acidic residues) spans 313-324 (AEEDAMRRKDEA). Disordered regions lie at residues 313 to 333 (AEED…SSPF), 350 to 370 (YPTP…DTPS), 397 to 417 (YTTT…APLE), 537 to 581 (ATSP…PASL), 660 to 689 (RAVS…VDTH), 841 to 862 (QAKG…IPSN), and 1233 to 1285 (TPTT…AADP). Positions 397–411 (YTTTDNQQHASTSPT) are enriched in polar residues. Over residues 666-685 (SASDSESETSDMSEGSPEDP) the composition is skewed to acidic residues. The span at 1233 to 1259 (TPTTPAPSNSSAQANTNTPGSTPQTGV) shows a compositional bias: polar residues.

It belongs to the Mediator complex subunit 13 family. In terms of assembly, component of the SRB8-11 complex, which itself associates with the Mediator complex.

It localises to the nucleus. In terms of biological role, component of the SRB8-11 complex. The SRB8-11 complex is a regulatory module of the Mediator complex which is itself involved in regulation of basal and activated RNA polymerase II-dependent transcription. The SRB8-11 complex may be involved in the transcriptional repression of a subset of genes regulated by Mediator. It may inhibit the association of the Mediator complex with RNA polymerase II to form the holoenzyme complex. In Phaeosphaeria nodorum (strain SN15 / ATCC MYA-4574 / FGSC 10173) (Glume blotch fungus), this protein is Mediator of RNA polymerase II transcription subunit 13 (SSN2).